A 590-amino-acid chain; its full sequence is Negative elongation factor D (590 aa).

A disordered region spans residues 15–43; it reads FGSAAEWGDEADGGQQEDDYGEGEDDAEV. Over residues 21 to 43 the composition is skewed to acidic residues; that stretch reads WGDEADGGQQEDDYGEGEDDAEV.

This sequence belongs to the NELF-D family. In terms of assembly, the NELF complex is composed of NELFA, NELFB, NELFCD and NELFE; NELFA and NELFCD form a stable subcomplex that binds primarily through NELFCD to the N-terminus of NELFB. Binds RNA which may help to stabilize the NELF complex on nucleic acid. In vitro, the NELFA:NELFCD subcomplex binds to ssDNA and ssRNA in a sequence- and structure-dependent manner. Interacts with ARAF1. Interacts with PCF11. Interacts with NELFB. Interacts with KAT8.

It is found in the nucleus. In terms of biological role, essential component of the NELF complex, a complex that negatively regulates the elongation of transcription by RNA polymerase II. The NELF complex, which acts via an association with the DSIF complex and causes transcriptional pausing, is counteracted by the P-TEFb kinase complex. The protein is Negative elongation factor D (NELFCD) of Sus scrofa (Pig).